Reading from the N-terminus, the 350-residue chain is Biotin synthase (350 aa).

Positions 41–268 (NEVQISRLLS…LSRVRLSAGR (228 aa)) constitute a Radical SAM core domain. [4Fe-4S] cluster-binding residues include Cys56, Cys60, and Cys63. Residues Cys100, Cys131, Cys191, and Arg263 each contribute to the [2Fe-2S] cluster site.

The protein belongs to the radical SAM superfamily. Biotin synthase family. Homodimer. [4Fe-4S] cluster is required as a cofactor. [2Fe-2S] cluster serves as cofactor.

The catalysed reaction is (4R,5S)-dethiobiotin + (sulfur carrier)-SH + 2 reduced [2Fe-2S]-[ferredoxin] + 2 S-adenosyl-L-methionine = (sulfur carrier)-H + biotin + 2 5'-deoxyadenosine + 2 L-methionine + 2 oxidized [2Fe-2S]-[ferredoxin]. It participates in cofactor biosynthesis; biotin biosynthesis; biotin from 7,8-diaminononanoate: step 2/2. Its function is as follows. Catalyzes the conversion of dethiobiotin (DTB) to biotin by the insertion of a sulfur atom into dethiobiotin via a radical-based mechanism. The chain is Biotin synthase from Shewanella baltica (strain OS223).